We begin with the raw amino-acid sequence, 265 residues long: Neutrophil elastase (265 aa).

Residues 1–26 (MALGRLSSRTLAAMLLALFLGGPALA) form the signal peptide. The region spanning 29–247 (IVGGRPARPH…FADWINSIIR (219 aa)) is the Peptidase S1 domain. Cys-54 and Cys-70 are oxidised to a cystine. Catalysis depends on charge relay system residues His-69 and Asp-116. Asn-123 and Asn-172 each carry an N-linked (GlcNAc...) asparagine glycan. Disulfide bonds link Cys-150–Cys-208, Cys-180–Cys-187, and Cys-198–Cys-223. Ser-202 acts as the Charge relay system in catalysis.

This sequence belongs to the peptidase S1 family. Elastase subfamily. In terms of assembly, interacts with NOTCH2NL.

It catalyses the reaction Hydrolysis of proteins, including elastin. Preferential cleavage: Val-|-Xaa &gt; Ala-|-Xaa.. Its function is as follows. Serine protease that modifies the functions of natural killer cells, monocytes and granulocytes. Inhibits C5a-dependent neutrophil enzyme release and chemotaxis. Promotes blood coagulation. Through the activation of the platelet fibrinogen receptor integrin alpha-IIb/beta-3, potentiates platelet aggregation induced by a threshold concentration of cathepsin G (CTSG). Cleaves and thus inactivates tissue factor pathway inhibitor (TFPI). Capable of killing E.coli; probably digests outer membrane protein A (ompA) in E.coli. The sequence is that of Neutrophil elastase (Elane) from Mus musculus (Mouse).